Consider the following 680-residue polypeptide: Meiotic recombination protein REC8 (680 aa).

Composition is skewed to low complexity over residues 278–290 (ENDN…GGED) and 436–446 (SLVSTQSSSST). 3 disordered regions span residues 278–297 (ENDN…ENEG), 431–467 (RKRA…YSSD), and 540–560 (EQNF…GSQQ). The segment covering 550–560 (SNSCFSDGSQQ) has biased composition (polar residues).

It belongs to the rad21 family. In terms of processing, proteolytically cleaved by ESP1. Post-translationally, phosphorylated by CDC5. CDC5 phosphorylation is necessary for cleavage by ESP1 and subsequent removal from chromosome arms.

It localises to the nucleus. The protein resides in the chromosome. Its subcellular location is the centromere. Functionally, replaces the SCC1 mitosis-specific cohesin to ensure sister chromatid cohesion during meiosis. Is cleaved by ESP1 shortly before the first meiotic division, and dissociates from chromatin, allowing sister chromatids to segregate. Is protected from cleavage by SPO13. Promotes localization of the LINC complex subunit MPS3 on nuclear envelope in mitotic cells. The polypeptide is Meiotic recombination protein REC8 (Saccharomyces cerevisiae (strain ATCC 204508 / S288c) (Baker's yeast)).